The following is a 209-amino-acid chain: Mitochondrial import inner membrane translocase subunit Tim23 (209 aa).

A run of 3 helical transmembrane segments spans residues 73-93 (FELAFFTIGGCCMTGAAFGAL), 125-145 (ALWANTLGSLALLYSAFGVII), and 181-197 (GLAGLTLTSVYALYNNW).

The protein belongs to the Tim17/Tim22/Tim23 family. Component of the TIM23 complex at least composed of TIMM23, TIMM17 (TIMM17A or TIMM17B) and TIMM50; within this complex, directly interacts with TIMM50. The complex interacts with the TIMM44 component of the PAM complex and with DNAJC15. Upon mitochondrial depolarization, interacts with PINK1; the interaction is required for PINK1 accumulation at the outer mitochondrial membrane, kinase activation by autophosphorylation and PRKN recruitement to mitochondria.

It is found in the mitochondrion inner membrane. In terms of biological role, essential component of the TIM23 complex, a complex that mediates the translocation of transit peptide-containing proteins across the mitochondrial inner membrane. Has a role in the activation of stress-induced mitophagy by protecting PINK1 from OMA1-mediated degradation and facilitating its accumulation at the outer mitochondrial membrane in response to depolarization. The sequence is that of Mitochondrial import inner membrane translocase subunit Tim23 (Timm23) from Rattus norvegicus (Rat).